Consider the following 615-residue polypeptide: Elongation factor 4 (615 aa).

A tr-type G domain is found at 14 to 200 (SRIRNFCIIA…KVVELIPAPS (187 aa)). Residues 26–31 (DHGKST) and 147–150 (NKID) each bind GTP.

The protein belongs to the TRAFAC class translation factor GTPase superfamily. Classic translation factor GTPase family. LepA subfamily.

The protein localises to the cell membrane. It carries out the reaction GTP + H2O = GDP + phosphate + H(+). Required for accurate and efficient protein synthesis under certain stress conditions. May act as a fidelity factor of the translation reaction, by catalyzing a one-codon backward translocation of tRNAs on improperly translocated ribosomes. Back-translocation proceeds from a post-translocation (POST) complex to a pre-translocation (PRE) complex, thus giving elongation factor G a second chance to translocate the tRNAs correctly. Binds to ribosomes in a GTP-dependent manner. The protein is Elongation factor 4 of Corynebacterium efficiens (strain DSM 44549 / YS-314 / AJ 12310 / JCM 11189 / NBRC 100395).